We begin with the raw amino-acid sequence, 494 residues long: Glutamate decarboxylase 2 (494 aa).

The residue at position 276 (Lys-276) is an N6-(pyridoxal phosphate)lysine. Residues 463–494 (VKEKKMEKEILMEVIVGWRKFVKERKKMNGVC) form a calmodulin-binding region.

Belongs to the group II decarboxylase family. Homohexamer. Interacts with calmodulin. Pyridoxal 5'-phosphate is required as a cofactor. In terms of tissue distribution, expressed in roots, inflorescence stems, flowers, siliques and leaves.

It catalyses the reaction L-glutamate + H(+) = 4-aminobutanoate + CO2. Its activity is regulated as follows. Up-regulated by calmodulin binding at physiological pH. Its function is as follows. Catalyzes the conversion of glutamate to 4-aminobutanoate (GABA). The calmodulin-binding is calcium-dependent and it is proposed to directly or indirectly form a calcium regulated control of GABA biosynthesis. The protein is Glutamate decarboxylase 2 (GAD2) of Arabidopsis thaliana (Mouse-ear cress).